A 220-amino-acid polypeptide reads, in one-letter code: Thiopurine S-methyltransferase (220 aa).

Positions 10, 45, 66, and 123 each coordinate S-adenosyl-L-methionine.

It belongs to the class I-like SAM-binding methyltransferase superfamily. TPMT family.

It is found in the cytoplasm. It catalyses the reaction S-adenosyl-L-methionine + a thiopurine = S-adenosyl-L-homocysteine + a thiopurine S-methylether.. The chain is Thiopurine S-methyltransferase from Nitrosomonas eutropha (strain DSM 101675 / C91 / Nm57).